The following is a 65-amino-acid chain: MAKSKGARIVITLECSNKSVDISQKRKAGVFRYTTTKNRRNTPGRIELKKFCPNCNSHCVFKEIK.

It belongs to the bacterial ribosomal protein bL33 family.

The protein resides in the plastid. Its subcellular location is the chloroplast. This chain is Large ribosomal subunit protein bL33c (rpl33), found in Porphyra purpurea (Red seaweed).